We begin with the raw amino-acid sequence, 239 residues long: Ribonuclease 3 (239 aa).

The region spanning 11–133 (HTAIQKKLGY…MFAAVSFDAD (123 aa)) is the RNase III domain. Glu-46 is a binding site for Mg(2+). Asp-50 is a catalytic residue. The Mg(2+) site is built by Asp-119 and Glu-122. Glu-122 is an active-site residue. Residues 160 to 230 (DGKTALQEAL…AKEALKWLEE (71 aa)) enclose the DRBM domain.

The protein belongs to the ribonuclease III family. Homodimer. The cofactor is Mg(2+).

It is found in the cytoplasm. The enzyme catalyses Endonucleolytic cleavage to 5'-phosphomonoester.. In terms of biological role, digests double-stranded RNA. Involved in the processing of primary rRNA transcript to yield the immediate precursors to the large and small rRNAs (23S and 16S). Processes some mRNAs, and tRNAs when they are encoded in the rRNA operon. Processes pre-crRNA and tracrRNA of type II CRISPR loci if present in the organism. This is Ribonuclease 3 from Neisseria gonorrhoeae (strain ATCC 700825 / FA 1090).